The sequence spans 998 residues: Antigenic heat-stable 120 kDa protein (998 aa).

The interval G1–Q69 is disordered. Residues E12–I21 are compositionally biased toward acidic residues. Residues T46 to D68 are compositionally biased toward polar residues.

The protein resides in the cytoplasm. The protein is Antigenic heat-stable 120 kDa protein (sca4) of Rickettsia akari.